The following is a 404-amino-acid chain: Probable oxalate decarboxylase ARB_04859 (404 aa).

Positions methionine 1–alanine 17 are cleaved as a signal peptide. A Cupin type-1 1 domain is found at phenylalanine 74–aspartate 215. Mn(2+) contacts are provided by histidine 117, histidine 119, glutamate 123, and histidine 162. Asparagine 226 and asparagine 244 each carry an N-linked (GlcNAc...) asparagine glycan. Residues phenylalanine 249 to glutamate 393 form the Cupin type-1 2 domain. Histidine 296, histidine 298, glutamate 303, and histidine 342 together coordinate Mn(2+). Residue asparagine 346 is glycosylated (N-linked (GlcNAc...) asparagine). Glutamate 357 (proton donor) is an active-site residue.

Mn(2+) serves as cofactor.

The protein resides in the secreted. The catalysed reaction is oxalate + H(+) = formate + CO2. Converts oxalate to formate and CO(2) in an O(2)-dependent reaction. Can also catalyze minor side reactions: oxalate oxidation to produce H(2)O(2), and oxalate-dependent, H(2)O(2)-independent dye oxidations. This Arthroderma benhamiae (strain ATCC MYA-4681 / CBS 112371) (Trichophyton mentagrophytes) protein is Probable oxalate decarboxylase ARB_04859.